A 205-amino-acid polypeptide reads, in one-letter code: Ribosomal RNA small subunit methyltransferase G (205 aa).

S-adenosyl-L-methionine contacts are provided by residues Gly-73, Leu-78, Val-124–Glu-125, and Arg-138.

The protein belongs to the methyltransferase superfamily. RNA methyltransferase RsmG family.

Its subcellular location is the cytoplasm. It carries out the reaction guanosine(527) in 16S rRNA + S-adenosyl-L-methionine = N(7)-methylguanosine(527) in 16S rRNA + S-adenosyl-L-homocysteine. Functionally, specifically methylates the N7 position of guanine in position 527 of 16S rRNA. The sequence is that of Ribosomal RNA small subunit methyltransferase G from Actinobacillus pleuropneumoniae serotype 7 (strain AP76).